A 189-amino-acid polypeptide reads, in one-letter code: ATP-dependent protease subunit HslV (189 aa).

T12 is an active-site residue. A172, C175, and T178 together coordinate Na(+).

It belongs to the peptidase T1B family. HslV subfamily. A double ring-shaped homohexamer of HslV is capped on each side by a ring-shaped HslU homohexamer. The assembly of the HslU/HslV complex is dependent on binding of ATP.

It localises to the cytoplasm. The enzyme catalyses ATP-dependent cleavage of peptide bonds with broad specificity.. With respect to regulation, allosterically activated by HslU binding. Protease subunit of a proteasome-like degradation complex believed to be a general protein degrading machinery. In Ehrlichia ruminantium (strain Welgevonden), this protein is ATP-dependent protease subunit HslV.